The following is a 444-amino-acid chain: UDP-N-acetylmuramate--L-alanine ligase (444 aa).

110-116 (GAHGKTS) contributes to the ATP binding site.

This sequence belongs to the MurCDEF family.

Its subcellular location is the cytoplasm. It carries out the reaction UDP-N-acetyl-alpha-D-muramate + L-alanine + ATP = UDP-N-acetyl-alpha-D-muramoyl-L-alanine + ADP + phosphate + H(+). It participates in cell wall biogenesis; peptidoglycan biosynthesis. Cell wall formation. This Streptococcus pneumoniae (strain P1031) protein is UDP-N-acetylmuramate--L-alanine ligase.